Here is a 455-residue protein sequence, read N- to C-terminus: Epoxide hydrolase 1 (455 aa).

A helical; Signal-anchor for type III membrane protein membrane pass occupies residues M1–G21. At D22 to Q455 the chain is on the cytoplasmic side. Residue D226 is the Nucleophile of the active site. R295 is subject to Dimethylated arginine. Y374 (proton donor) is an active-site residue. Residue H431 is the Proton acceptor of the active site.

The protein belongs to the peptidase S33 family.

The protein localises to the microsome membrane. Its subcellular location is the endoplasmic reticulum membrane. It catalyses the reaction cis-stilbene oxide + H2O = (1R,2R)-hydrobenzoin. The enzyme catalyses 1-(4-methoxyphenyl)-N-methyl-N-[(3-methyloxetan-3-yl)methyl]methanamine + H2O = 2-{[(4-methoxybenzyl)(methyl)amino]methyl}-2-methylpropane-1,3-diol. It carries out the reaction 8,9-epoxy-(5Z,11Z,14Z)-eicosatrienoate + H2O = 8,9-dihydroxy-(5Z,11Z,14Z)-eicosatrienoate. The catalysed reaction is 11,12-epoxy-(5Z,8Z,14Z)-eicosatrienoate + H2O = 11,12-dihydroxy-(5Z,8Z,14Z)-eicosatrienoate. It catalyses the reaction 2-(5Z,8Z,11Z,14Z-eicosatetraenoyl)-glycerol + H2O = glycerol + (5Z,8Z,11Z,14Z)-eicosatetraenoate + H(+). Inhibited by 10-hydroxystearamide and methoxy-arachidonyl fluorophosphate. Its function is as follows. Biotransformation enzyme that catalyzes the hydrolysis of arene and aliphatic epoxides to less reactive and more water soluble dihydrodiols by the trans addition of water. May play a role in the metabolism of endogenous lipids such as epoxide-containing fatty acids. Metabolizes the abundant endocannabinoid 2-arachidonoylglycerol (2-AG) to free arachidonic acid (AA) and glycerol. Binds 20(S)-hydroxycholesterol (20(S)-OHC). The polypeptide is Epoxide hydrolase 1 (EPHX1) (Oryctolagus cuniculus (Rabbit)).